The primary structure comprises 297 residues: Probable porphobilinogen deaminase (297 aa).

The residue at position 233 (Cys233) is an S-(dipyrrolylmethanemethyl)cysteine.

The protein belongs to the HMBS family. Requires dipyrromethane as cofactor.

The catalysed reaction is 4 porphobilinogen + H2O = hydroxymethylbilane + 4 NH4(+). It functions in the pathway porphyrin-containing compound metabolism; protoporphyrin-IX biosynthesis; coproporphyrinogen-III from 5-aminolevulinate: step 2/4. Its function is as follows. Tetrapolymerization of the monopyrrole PBG into the hydroxymethylbilane pre-uroporphyrinogen in several discrete steps. This Thermoplasma volcanium (strain ATCC 51530 / DSM 4299 / JCM 9571 / NBRC 15438 / GSS1) protein is Probable porphobilinogen deaminase.